A 473-amino-acid polypeptide reads, in one-letter code: Isocitrate dehydrogenase [NADP] (473 aa).

NADP(+) is bound at residue Thr104. Ser113, Asn115, Arg119, Arg129, and Arg153 together coordinate D-threo-isocitrate. Asp362 lines the Mg(2+) pocket. NADP(+) is bound by residues 394–400, Asn407, Tyr446, and Arg450; that span reads HGTAPKH.

Belongs to the isocitrate and isopropylmalate dehydrogenases family. As to quaternary structure, homodimer. Requires Mg(2+) as cofactor. It depends on Mn(2+) as a cofactor.

It carries out the reaction D-threo-isocitrate + NADP(+) = 2-oxoglutarate + CO2 + NADPH. With respect to regulation, inhibited by either oxaloacetate or glyoxylate. Also inhibited by the adenine nucleotides AMP, ADP and ATP and by NADPH, which inhibits the activity by 28% when it is added to the assay mixture at 0.25 mM. Its function is as follows. Catalyzes the oxidative decarboxylation of isocitrate to 2-oxoglutarate and carbon dioxide with the concomitant reduction of NADP(+). This Nostoc sp. (strain PCC 7120 / SAG 25.82 / UTEX 2576) protein is Isocitrate dehydrogenase [NADP].